The sequence spans 305 residues: NAD-dependent protein deacylase SIR4 (305 aa).

The transit peptide at 1 to 10 directs the protein to the mitochondrion; that stretch reads MSAQVMHNRV. Residues 11–305 enclose the Deacetylase sirtuin-type domain; it reads MGTVKDSASK…VLEELASTIR (295 aa). NAD(+)-binding positions include 37 to 57 and 118 to 121; these read GAGV…GIYS and QNVD. The Proton acceptor role is filled by His139. Residues Cys147, Cys150, Cys209, and Cys212 each coordinate Zn(2+). NAD(+)-binding positions include 249–251, 275–277, and Ser293; these read GSS and NLG.

This sequence belongs to the sirtuin family. Class II subfamily. It depends on Zn(2+) as a cofactor.

It is found in the mitochondrion matrix. The enzyme catalyses N(6)-acetyl-L-lysyl-[protein] + NAD(+) + H2O = 2''-O-acetyl-ADP-D-ribose + nicotinamide + L-lysyl-[protein]. In terms of biological role, NAD-dependent protein deacylase. Catalyzes the NAD-dependent hydrolysis of acyl groups from lysine residues. This chain is NAD-dependent protein deacylase SIR4, found in Batrachochytrium dendrobatidis (strain JAM81 / FGSC 10211) (Frog chytrid fungus).